Here is a 204-residue protein sequence, read N- to C-terminus: Holliday junction resolvase RecU (204 aa).

A disordered region spans residues M1–P24. The span at N7–P24 shows a compositional bias: polar residues. 4 residues coordinate Mg(2+): T87, D89, D102, and Q121.

It belongs to the RecU family. Requires Mg(2+) as cofactor.

Its subcellular location is the cytoplasm. It carries out the reaction Endonucleolytic cleavage at a junction such as a reciprocal single-stranded crossover between two homologous DNA duplexes (Holliday junction).. Its function is as follows. Endonuclease that resolves Holliday junction intermediates in genetic recombination. Cleaves mobile four-strand junctions by introducing symmetrical nicks in paired strands. Promotes annealing of linear ssDNA with homologous dsDNA. Required for DNA repair, homologous recombination and chromosome segregation. The polypeptide is Holliday junction resolvase RecU (Limosilactobacillus reuteri (strain DSM 20016) (Lactobacillus reuteri)).